The primary structure comprises 743 residues: Phosphoribosylformylglycinamidine synthase subunit PurL (743 aa).

Residue His-53 is part of the active site. ATP is bound by residues Tyr-56 and Lys-95. Glu-97 serves as a coordination point for Mg(2+). Residues 98–101 (SHNH) and Arg-120 each bind substrate. Residue His-99 is the Proton acceptor of the active site. Asp-121 is a binding site for Mg(2+). Gln-245 is a substrate binding site. Asp-275 serves as a coordination point for Mg(2+). 319–321 (ESQ) lines the substrate pocket. 2 residues coordinate ATP: Asp-502 and Gly-539. Mg(2+) is bound at residue Asn-540. Ser-542 provides a ligand contact to substrate.

The protein belongs to the FGAMS family. In terms of assembly, monomer. Part of the FGAM synthase complex composed of 1 PurL, 1 PurQ and 2 PurS subunits.

Its subcellular location is the cytoplasm. It catalyses the reaction N(2)-formyl-N(1)-(5-phospho-beta-D-ribosyl)glycinamide + L-glutamine + ATP + H2O = 2-formamido-N(1)-(5-O-phospho-beta-D-ribosyl)acetamidine + L-glutamate + ADP + phosphate + H(+). It participates in purine metabolism; IMP biosynthesis via de novo pathway; 5-amino-1-(5-phospho-D-ribosyl)imidazole from N(2)-formyl-N(1)-(5-phospho-D-ribosyl)glycinamide: step 1/2. In terms of biological role, part of the phosphoribosylformylglycinamidine synthase complex involved in the purines biosynthetic pathway. Catalyzes the ATP-dependent conversion of formylglycinamide ribonucleotide (FGAR) and glutamine to yield formylglycinamidine ribonucleotide (FGAM) and glutamate. The FGAM synthase complex is composed of three subunits. PurQ produces an ammonia molecule by converting glutamine to glutamate. PurL transfers the ammonia molecule to FGAR to form FGAM in an ATP-dependent manner. PurS interacts with PurQ and PurL and is thought to assist in the transfer of the ammonia molecule from PurQ to PurL. The sequence is that of Phosphoribosylformylglycinamidine synthase subunit PurL from Lactobacillus helveticus (strain DPC 4571).